We begin with the raw amino-acid sequence, 519 residues long: Probable DNA ligase (519 aa).

ATP is bound at residue glutamate 211. Catalysis depends on lysine 213, which acts as the N6-AMP-lysine intermediate. ATP-binding residues include arginine 218, arginine 233, glutamate 262, phenylalanine 302, arginine 374, and lysine 380.

The protein belongs to the ATP-dependent DNA ligase family. Mg(2+) serves as cofactor.

It carries out the reaction ATP + (deoxyribonucleotide)n-3'-hydroxyl + 5'-phospho-(deoxyribonucleotide)m = (deoxyribonucleotide)n+m + AMP + diphosphate.. Functionally, DNA ligase that seals nicks in double-stranded DNA during DNA replication, DNA recombination and DNA repair. In Anaeromyxobacter sp. (strain Fw109-5), this protein is Probable DNA ligase.